The primary structure comprises 513 residues: ATP synthase subunit alpha (513 aa).

169–176 (GDRKTGKS) lines the ATP pocket.

This sequence belongs to the ATPase alpha/beta chains family. F-type ATPases have 2 components, CF(1) - the catalytic core - and CF(0) - the membrane proton channel. CF(1) has five subunits: alpha(3), beta(3), gamma(1), delta(1), epsilon(1). CF(0) has three main subunits: a(1), b(2) and c(9-12). The alpha and beta chains form an alternating ring which encloses part of the gamma chain. CF(1) is attached to CF(0) by a central stalk formed by the gamma and epsilon chains, while a peripheral stalk is formed by the delta and b chains.

The protein resides in the cell membrane. The catalysed reaction is ATP + H2O + 4 H(+)(in) = ADP + phosphate + 5 H(+)(out). Produces ATP from ADP in the presence of a proton gradient across the membrane. The alpha chain is a regulatory subunit. This is ATP synthase subunit alpha from Levilactobacillus brevis (strain ATCC 367 / BCRC 12310 / CIP 105137 / JCM 1170 / LMG 11437 / NCIMB 947 / NCTC 947) (Lactobacillus brevis).